The chain runs to 239 residues: Sugar fermentation stimulation protein homolog (239 aa).

This sequence belongs to the SfsA family.

The protein is Sugar fermentation stimulation protein homolog of Alcanivorax borkumensis (strain ATCC 700651 / DSM 11573 / NCIMB 13689 / SK2).